The following is a 535-amino-acid chain: MAKKVVVIGAGVSGLISLKCCVDEGLEPTCFERTEDIGGLWRFKENVEDGRASIYRSVITNTSKEMSCFSDFPMPEDFPNFLHNSKLLEYFRIFAKKFDLLKYIQFQTTVISVKKRPDFASSGQWEVYTQSNGKEQRTVFDAVMVCSGHHIQPHLPLKSFPGIERFRGQYFHSREYKHPVGFEGKRILVVGIGNSAADIASELSKTAAQVFVSTRHGSWVMSRISEDGYPWDMVFHTRFSSMLRNVLPRTVVKWMMEQQMNRWFNHENYGLVPQNKYLMKEPVLNDDLPSRLLYGAIKVKTRVKELTETAVVFEDGTVEEDVDIIVFATGYTFSFSFLEDSLVKVEDNRVSLYKAMFPPHLEKPTLACIGLIQPLGSIFPTVELQARWATRVFKGLCSLPSETTMMADIVERNEKRVNLFGKSQSQILQTNYVDYLDELALEIGAKPDFVSLFFKDPKLAVKLYFGPCNSYQYRLVGPGQWEGARNAILTQKQRILKPLKTRTLQSSDSAPVSFLLKILGLLAVVLAFFFQLQGF.

Residue A2 is modified to N-acetylalanine. FAD-binding positions include 9–13, E32, 40–41, and 61–62; these read GAGVS, LW, and NT. NADP(+) contacts are provided by residues 60–61 and 195–198; these read TN and SAAD. K492 is covalently cross-linked (Glycyl lysine isopeptide (Lys-Gly) (interchain with G-Cter in SUMO)). A helical transmembrane segment spans residues 510-530; that stretch reads APVSFLLKILGLLAVVLAFFF.

The protein belongs to the FMO family. FAD serves as cofactor. Mg(2+) is required as a cofactor.

Its subcellular location is the microsome membrane. The protein localises to the endoplasmic reticulum membrane. Its function is as follows. Catalyzes the oxidative metabolism of numerous xenobiotics, including mainly therapeutic drugs and insecticides that contain a soft nucleophile, most commonly nitrogen and sulfur and participates to their bioactivation. Catalyzes the S-oxygenation of the prodrug ethionamide (ETA) to the S-oxide (ETASO), the first step in its bioactivation following by the second oxygenation to the sulfinic acid but to a lesser extend. This Mus musculus (Mouse) protein is Dimethylaniline monooxygenase [N-oxide-forming] 2.